A 78-amino-acid chain; its full sequence is Large ribosomal subunit protein bL28 (78 aa).

Residues 1–31 (MAAHCQVTGAEPGFGHSISHSHRRNKRRFDP) form a disordered region.

It belongs to the bacterial ribosomal protein bL28 family.

This chain is Large ribosomal subunit protein bL28, found in Pseudarthrobacter chlorophenolicus (strain ATCC 700700 / DSM 12829 / CIP 107037 / JCM 12360 / KCTC 9906 / NCIMB 13794 / A6) (Arthrobacter chlorophenolicus).